The chain runs to 265 residues: Orotidine 5'-phosphate decarboxylase (265 aa).

Substrate is bound by residues Asp38, 60-62, 92-101, Tyr218, and Arg236; these read KTH and DRKFADIGKT. The active-site Proton donor is the Lys94.

The protein belongs to the OMP decarboxylase family.

The enzyme catalyses orotidine 5'-phosphate + H(+) = UMP + CO2. The protein operates within pyrimidine metabolism; UMP biosynthesis via de novo pathway; UMP from orotate: step 2/2. This chain is Orotidine 5'-phosphate decarboxylase (URA3), found in Cyberlindnera fabianii (Yeast).